Here is a 420-residue protein sequence, read N- to C-terminus: MKTLIARHKAGEHIGICSVCSAHPLVIEAALAFDRNSTRKVLIEATSNQVNQFGGYTGMTPADFREFVFAIANKVGFARERIILGGDHLGPNCWQQENADAAMEKSVELVKAYVRAGFSKIHLDASMSCAGDPIPLAPETVAERAAVLCLAAESVATDCQREQLSYVIGTEVPVPGGEASAIQSVHITQVEDAANTLRTHQKAFIARGLAEALTRVIAIVVQPGVEFDHINIIHYQAQEAQALAQWIEKTKMVYEAHSTDYQTQAAYRELVRDHFAILKVGPALTFALREAVFALAQIEQELIAPENRSGCLAVIEEVMLDEPQYWKKYYRTGFHDSLLDIRYSLSDRIRYYWPHSRIKNSVETMMVNLEGVDIPLGMISQYLPKQFERIQSGELSAIPHQLIMDKIYDVLRAYRYGCAE.

The protein belongs to the GatZ/KbaZ family. GatZ subfamily. As to quaternary structure, forms a complex with GatY.

It participates in carbohydrate metabolism; D-tagatose 6-phosphate degradation; D-glyceraldehyde 3-phosphate and glycerone phosphate from D-tagatose 6-phosphate: step 2/2. In terms of biological role, component of the tagatose-1,6-bisphosphate aldolase GatYZ that is required for full activity and stability of the Y subunit. Could have a chaperone-like function for the proper and stable folding of GatY. When expressed alone, GatZ does not show any aldolase activity. Is involved in the catabolism of galactitol. The sequence is that of D-tagatose-1,6-bisphosphate aldolase subunit GatZ from Escherichia coli O7:K1 (strain IAI39 / ExPEC).